Reading from the N-terminus, the 443-residue chain is D-alanyl-L-alanine endopeptidase (443 aa).

In terms of domain architecture, Peptidase C51 spans 1–131 (MATYQEYKSR…KIPYSATYPT (131 aa)). The active-site Nucleophile is the cysteine 26. Histidine 91 acts as the Increases nucleophilicity of active site cys; for D-alanyl-L-alanine endopeptidase activity in catalysis. An acm domain region spans residues 145–344 (TDNTGLNKGD…GLDKNIVLLA (200 aa)). In terms of domain architecture, SH3b spans 380–441 (YYEATLSTDY…VEDNYLVNAT (62 aa)).

The protein belongs to the glycosyl hydrolase 25 family.

The catalysed reaction is Hydrolysis of (1-&gt;4)-beta-linkages between N-acetylmuramic acid and N-acetyl-D-glucosamine residues in a peptidoglycan and between N-acetyl-D-glucosamine residues in chitodextrins.. With respect to regulation, ca++ enhances the activity of the enzyme. Its function is as follows. The endopeptidase activity cleaves the bacterial peptidoglycan between D-alanine and L-alanine. The N-acetyl-muramidase activity cleaves between N-acetylmuramic acid and N-acetylglucosamine bonds. The protein is D-alanyl-L-alanine endopeptidase of Streptococcus agalactiae (Streptococcus agalactiae bacteriophage B30).